The sequence spans 180 residues: Probable chorismate pyruvate-lyase (180 aa).

Substrate contacts are provided by arginine 82, leucine 120, and glutamate 165.

The protein belongs to the UbiC family.

It localises to the cytoplasm. It carries out the reaction chorismate = 4-hydroxybenzoate + pyruvate. It participates in cofactor biosynthesis; ubiquinone biosynthesis. Removes the pyruvyl group from chorismate, with concomitant aromatization of the ring, to provide 4-hydroxybenzoate (4HB) for the ubiquinone pathway. The sequence is that of Probable chorismate pyruvate-lyase from Photobacterium profundum (strain SS9).